The chain runs to 30 residues: Cysteine-rich venom protein mossambin (30 aa).

Positions 1-30 (NVDFNSESTRRKKKQNEIVDLHNSLRRTVN) are disordered.

This sequence belongs to the CRISP family. Post-translationally, contains 8 disulfide bonds. In terms of tissue distribution, expressed by the venom gland.

The protein localises to the secreted. In terms of biological role, inhibits calcium-activated potassium channels (KCa), voltage-gated potassium channel (Kv), and the calcium release channel/ryanodine receptor (RyR). The sequence is that of Cysteine-rich venom protein mossambin from Naja mossambica (Mozambique spitting cobra).